The following is a 21-amino-acid chain: Thylakoid lumenal 13.8 kDa protein (21 aa).

It is found in the plastid. The protein localises to the chloroplast thylakoid lumen. This Spinacia oleracea (Spinach) protein is Thylakoid lumenal 13.8 kDa protein.